We begin with the raw amino-acid sequence, 293 residues long: Acetylglutamate kinase (293 aa).

Residues 68–69, arginine 90, and asparagine 189 each bind substrate; that span reads GG.

This sequence belongs to the acetylglutamate kinase family. ArgB subfamily.

It localises to the cytoplasm. It catalyses the reaction N-acetyl-L-glutamate + ATP = N-acetyl-L-glutamyl 5-phosphate + ADP. It functions in the pathway amino-acid biosynthesis; L-arginine biosynthesis; N(2)-acetyl-L-ornithine from L-glutamate: step 2/4. In terms of biological role, catalyzes the ATP-dependent phosphorylation of N-acetyl-L-glutamate. This Caldicellulosiruptor saccharolyticus (strain ATCC 43494 / DSM 8903 / Tp8T 6331) protein is Acetylglutamate kinase.